The following is a 332-amino-acid chain: UDP-N-acetylenolpyruvoylglucosamine reductase (332 aa).

An FAD-binding PCMH-type domain is found at 15-184 (IDVSAACFLE…TYVSFRLSKR (170 aa)). R160 is a catalytic residue. The active-site Proton donor is S232. E328 is a catalytic residue.

This sequence belongs to the MurB family. FAD is required as a cofactor.

It is found in the cytoplasm. It carries out the reaction UDP-N-acetyl-alpha-D-muramate + NADP(+) = UDP-N-acetyl-3-O-(1-carboxyvinyl)-alpha-D-glucosamine + NADPH + H(+). It participates in cell wall biogenesis; peptidoglycan biosynthesis. Functionally, cell wall formation. The sequence is that of UDP-N-acetylenolpyruvoylglucosamine reductase from Bacteroides fragilis (strain YCH46).